We begin with the raw amino-acid sequence, 215 residues long: Unique short US11 glycoprotein (215 aa).

The segment at residues Met-1 to Ser-17 is a signal peptide (partially cleaved). Residues Met-18 to Gln-182 are Lumenal-facing. In terms of domain architecture, Ig-like H-type spans Tyr-47–Cys-146. Cys-56 and Cys-142 are disulfide-bonded. Asn-73 carries N-linked (GlcNAc...) asparagine; by host glycosylation. A helical membrane pass occupies residues Tyr-183–Leu-203. The Cytoplasmic portion of the chain corresponds to His-204 to Trp-215.

The protein belongs to the cytomegalovirus US6 family. Interacts with host TRAM1. Post-translationally, N-glycosylated. A fraction of newly synthesized molecules retain the signal peptide after the N-linked glycan has been attached and translation of the polypeptide has been completed. Delayed cleavage of the signal peptide is determined by the first four residues, as well as by the transmembrane region.

It localises to the host endoplasmic reticulum membrane. Functionally, participates in the inhibition of the host immune response. Redirects newly synthesized major histocompatibility complex (MHC) class I heavy chains via the SEC61 translocon to the cytosol where they undergo proteasome-dependent destruction. In consequence, infected cells are masked for immune recognition by cytotoxic T-lymphocytes. This is Unique short US11 glycoprotein (US11) from Human cytomegalovirus (strain AD169) (HHV-5).